Consider the following 479-residue polypeptide: Cysteine--tRNA ligase (479 aa).

Cys29 is a binding site for Zn(2+). The 'HIGH' region signature appears at 31–41 (ATVQGAPHIGH). The interval 171–197 (QRVEDMQDAPDADPRGKRDPRDFALWK) is disordered. Basic and acidic residues predominate over residues 182–197 (ADPRGKRDPRDFALWK). Zn(2+)-binding residues include Cys224, His249, and Glu253. The short motif at 280-284 (KMSKS) is the 'KMSKS' region element. An ATP-binding site is contributed by Lys283.

This sequence belongs to the class-I aminoacyl-tRNA synthetase family. In terms of assembly, monomer. Requires Zn(2+) as cofactor.

The protein resides in the cytoplasm. It carries out the reaction tRNA(Cys) + L-cysteine + ATP = L-cysteinyl-tRNA(Cys) + AMP + diphosphate. The protein is Cysteine--tRNA ligase of Kocuria rhizophila (strain ATCC 9341 / DSM 348 / NBRC 103217 / DC2201).